The sequence spans 453 residues: DNA repair protein RadA (453 aa).

A C4-type zinc finger spans residues cysteine 10–cysteine 27. Glycine 95–serine 102 contributes to the ATP binding site. The RadA KNRFG motif motif lies at lysine 251–glycine 255. The segment at aspartate 350–serine 453 is lon-protease-like.

It belongs to the RecA family. RadA subfamily.

DNA-dependent ATPase involved in processing of recombination intermediates, plays a role in repairing DNA breaks. Stimulates the branch migration of RecA-mediated strand transfer reactions, allowing the 3' invading strand to extend heteroduplex DNA faster. Binds ssDNA in the presence of ADP but not other nucleotides, has ATPase activity that is stimulated by ssDNA and various branched DNA structures, but inhibited by SSB. Does not have RecA's homology-searching function. This chain is DNA repair protein RadA, found in Streptococcus pyogenes serotype M3 (strain ATCC BAA-595 / MGAS315).